An 84-amino-acid polypeptide reads, in one-letter code: MENDVSSLMLEDEKGDKVKFQVVTKFDIEDREYIIVVPEENEDSKEAIVLKIVEGEDGREAFITVEDDEEFNQVSEVYEALFND.

This sequence belongs to the UPF0473 family.

The protein is UPF0473 protein CKL_1327 of Clostridium kluyveri (strain ATCC 8527 / DSM 555 / NBRC 12016 / NCIMB 10680 / K1).